We begin with the raw amino-acid sequence, 249 residues long: Probable transcriptional regulatory protein OTBS_0251 (249 aa).

The protein belongs to the TACO1 family.

The protein resides in the cytoplasm. This is Probable transcriptional regulatory protein OTBS_0251 from Orientia tsutsugamushi (strain Boryong) (Rickettsia tsutsugamushi).